Reading from the N-terminus, the 235-residue chain is MFIWTSGRTSSSYRQDEKRNIYQKIRDHDLLDKRKTVTALKAGEDRAILLGLAMMVCSIMMYFLLGITLLRSYMQSVWTEEAQCALLNVSITETFNCSFSCGPDCWKLSQYPCLQVYVNLTSSGERLLLYHTEETMKINQKCSYIPKCGNNFEESMSLVSVVMENFRRHQHFPCYSDPEGNQKSVILTKLYSSNVLFHSLFWPTCMMAGGVAIVAMVKLTQYLSLLCERIQRINR.

Residues 1–45 form a ball and chain region; sequence MFIWTSGRTSSSYRQDEKRNIYQKIRDHDLLDKRKTVTALKAGED. Topologically, residues 1-46 are cytoplasmic; that stretch reads MFIWTSGRTSSSYRQDEKRNIYQKIRDHDLLDKRKTVTALKAGEDR. The chain crosses the membrane as a helical span at residues 47–67; it reads AILLGLAMMVCSIMMYFLLGI. Residues 68 to 194 are Extracellular-facing; it reads TLLRSYMQSV…VILTKLYSSN (127 aa). N-linked (GlcNAc...) asparagine glycans are attached at residues asparagine 88, asparagine 96, and asparagine 119. A helical transmembrane segment spans residues 195–215; sequence VLFHSLFWPTCMMAGGVAIVA. Residues 216–235 are Cytoplasmic-facing; it reads MVKLTQYLSLLCERIQRINR.

Belongs to the KCNMB (TC 8.A.14.1) family. KCNMB2 subfamily. Interacts with KCNMA1 tetramer. There are probably 4 molecules of KCMNB2 per KCNMA1 tetramer. Post-translationally, N-glycosylated.

The protein resides in the membrane. Functionally, regulatory subunit of the calcium activated potassium KCNMA1 (maxiK) channel. Modulates the calcium sensitivity and gating kinetics of KCNMA1, thereby contributing to KCNMA1 channel diversity. Acts as a negative regulator that confers rapid and complete inactivation of KCNMA1 channel complex. This Mus musculus (Mouse) protein is Calcium-activated potassium channel subunit beta-2 (Kcnmb2).